We begin with the raw amino-acid sequence, 597 residues long: NADPH-dependent diflavin oxidoreductase 1 (597 aa).

A Flavodoxin-like domain is found at 6–150 (LLVLFGSQTG…AVDPWLRDLW (145 aa)). Residues 12 to 17 (SQTGTA), 59 to 62 (ATTG), 97 to 106 (LGDSSYAKFN), and D132 each bind FMN. Positions 188–207 (GSEGQRVAHPGSQEPPSESK) are disordered. In terms of domain architecture, FAD-binding FR-type spans 206–447 (SKPFLAPMIS…VRPGSLAFPE (242 aa)). FAD-binding positions include R350, 382–385 (RAFS), and 416–419 (GLCS). NADP(+)-binding positions include T460, 515–516 (SR), 521–525 (KVYVQ), and D558. An FAD-binding site is contributed by W596.

The protein belongs to the NADPH-dependent diflavin oxidoreductase NDOR1 family. In the N-terminal section; belongs to the flavodoxin family. This sequence in the C-terminal section; belongs to the flavoprotein pyridine nucleotide cytochrome reductase family. Interacts with CIAPIN1; as part of the cytosolic iron-sulfur (Fe-S) protein assembly (CIA) machinery. Interacts with DCPS. It depends on FAD as a cofactor. FMN is required as a cofactor. As to expression, low expression in brain, heart, kidney, pancreas, prostate and skeletal muscle. Highest levels in the placenta. Expressed in cancer cell lines including promyelocytic leukemia, HeLaS3, chronic myelagenous leukemia, lymphoblastic leukemia, Burkitt's lymphoma, colorectal adenocarcinoma, lung carcinoma, and melanoma G-361.

The protein resides in the cytoplasm. It localises to the perinuclear region. The enzyme catalyses 2 oxidized [2Fe-2S]-[protein] + NADPH = 2 reduced [2Fe-2S]-[protein] + NADP(+) + H(+). In terms of biological role, NADPH-dependent reductase which is a central component of the cytosolic iron-sulfur (Fe-S) protein assembly (CIA) machinery. Transfers electrons from NADPH via its FAD and FMN prosthetic groups to the [2Fe-2S] cluster of CIAPIN1, another key component of the CIA machinery. In turn, this reduced cluster provides electrons for assembly of cytosolic iron-sulfur cluster proteins. It can also reduce the [2Fe-2S] cluster of CISD1 and activate this protein implicated in Fe/S cluster repair. In vitro can fully activate methionine synthase/MTR in the presence of soluble cytochrome b5/CYB5A. The chain is NADPH-dependent diflavin oxidoreductase 1 from Homo sapiens (Human).